Here is a 289-residue protein sequence, read N- to C-terminus: Ferri-bacillibactin esterase BesA (289 aa).

Active-site charge relay system residues include Ser163, Glu225, and His263.

The protein belongs to the esterase D family.

It localises to the cytoplasm. Its function is as follows. Catalyzes the hydrolysis of the trilactone cycle of ferri-bacillibactin (ferri-BB) complex, leading to the formation of bacillibactin monomers and to cytosolic iron release, thus making iron available for metabolic use. Can also hydrolyze bacillibactin (BB), however the catalytic efficiency for ferri-BB hydrolysis is much higher than for BB. The polypeptide is Ferri-bacillibactin esterase BesA (besA) (Bacillus subtilis (strain 168)).